We begin with the raw amino-acid sequence, 297 residues long: MNMLFSLISEPFAYPFMQRAIVAAIVTGVVCAILSCYLVLKGWSLMGDAISHAVLPGIVLAFWLGIPLVIGAFVSGIFCAVATGYLKENSRVKEDTVMGIVFSGMFAFGLVLFSRIDTDQHLSHILFGNMLGISLTELKQTLWIAGFTLLVVLLKRKDFMLYCFDPNHARVIGLPVKFLHYGLLCLLALTIVASLQAVGVILVIAMLIAPGIIAFMICRSFDQMLVVATLVSVVACVLGTLISFHIDGATGPCIVIIQALFFVVALIYNHIKPIKDRKMAPLTKAVNPENTAPSNLP.

8 helical membrane-spanning segments follow: residues 20–40 (AIVA…YLVL), 58–78 (IVLA…SGIF), 96–116 (TVMG…FSRI), 133–153 (ISLT…LVVL), 172–192 (IGLP…LTIV), 197–217 (AVGV…AFMI), 224–244 (MLVV…LISF), and 248–268 (GATG…ALIY).

Belongs to the ABC-3 integral membrane protein family.

It localises to the cell inner membrane. Its function is as follows. Part of an ATP-driven transport system YfeABCD for chelated iron. This Yersinia pestis protein is Chelated iron transport system membrane protein YfeD (yfeD).